The sequence spans 361 residues: S-adenosylmethionine:tRNA ribosyltransferase-isomerase (361 aa).

Belongs to the QueA family. Monomer.

It is found in the cytoplasm. It carries out the reaction 7-aminomethyl-7-carbaguanosine(34) in tRNA + S-adenosyl-L-methionine = epoxyqueuosine(34) in tRNA + adenine + L-methionine + 2 H(+). It functions in the pathway tRNA modification; tRNA-queuosine biosynthesis. Transfers and isomerizes the ribose moiety from AdoMet to the 7-aminomethyl group of 7-deazaguanine (preQ1-tRNA) to give epoxyqueuosine (oQ-tRNA). The sequence is that of S-adenosylmethionine:tRNA ribosyltransferase-isomerase from Actinobacillus pleuropneumoniae serotype 5b (strain L20).